The chain runs to 289 residues: Protoheme IX farnesyltransferase 2 (289 aa).

9 helical membrane passes run 4–24 (PGIIFGNLISVAGGFLLAAKG), 28–48 (LVLMLASLVGLSLVVASGCAI), 66–86 (RVTVTGEIAVGNVLAFGLALG), 99–118 (ALALLFAVIGYIVYVGVYSL), 124–144 (SVYGTLVGSFSGAVPPVVGYC), 155–175 (AILLLMFSLWQMPHSYAIAIF), 199–219 (LHIVLYIAVFALVSALLPLAG), 221–241 (TGIAFMAVTCATSLWWLAMAL), and 256–276 (QVFGFSIITITALSVTMALDF).

Belongs to the UbiA prenyltransferase family. Protoheme IX farnesyltransferase subfamily.

It localises to the cell inner membrane. The catalysed reaction is heme b + (2E,6E)-farnesyl diphosphate + H2O = Fe(II)-heme o + diphosphate. It functions in the pathway porphyrin-containing compound metabolism; heme O biosynthesis; heme O from protoheme: step 1/1. Its function is as follows. Converts heme B (protoheme IX) to heme O by substitution of the vinyl group on carbon 2 of heme B porphyrin ring with a hydroxyethyl farnesyl side group. The polypeptide is Protoheme IX farnesyltransferase 2 (Shewanella baltica (strain OS195)).